Reading from the N-terminus, the 400-residue chain is S-adenosylmethionine synthase (400 aa).

Residue His-17 coordinates ATP. Asp-19 is a Mg(2+) binding site. Glu-45 serves as a coordination point for K(+). L-methionine-binding residues include Glu-58 and Gln-101. Residues 101–111 (QSPDIAMGVDQ) are flexible loop. ATP-binding positions include 177–179 (DGK), 244–245 (RF), Asp-253, 259–260 (RK), Ala-276, and Lys-280. Asp-253 is an L-methionine binding site. Lys-284 contributes to the L-methionine binding site.

It belongs to the AdoMet synthase family. As to quaternary structure, homotetramer; dimer of dimers. It depends on Mg(2+) as a cofactor. The cofactor is K(+).

The protein resides in the cytoplasm. The catalysed reaction is L-methionine + ATP + H2O = S-adenosyl-L-methionine + phosphate + diphosphate. The protein operates within amino-acid biosynthesis; S-adenosyl-L-methionine biosynthesis; S-adenosyl-L-methionine from L-methionine: step 1/1. Functionally, catalyzes the formation of S-adenosylmethionine (AdoMet) from methionine and ATP. The overall synthetic reaction is composed of two sequential steps, AdoMet formation and the subsequent tripolyphosphate hydrolysis which occurs prior to release of AdoMet from the enzyme. The protein is S-adenosylmethionine synthase of Bacillus licheniformis (strain ATCC 14580 / DSM 13 / JCM 2505 / CCUG 7422 / NBRC 12200 / NCIMB 9375 / NCTC 10341 / NRRL NRS-1264 / Gibson 46).